Reading from the N-terminus, the 163-residue chain is NADH-quinone oxidoreductase subunit I (163 aa).

2 consecutive 4Fe-4S ferredoxin-type domains span residues 53 to 83 (LRRYPNGEERCIACKLCEAICPAQAITIEAG) and 94 to 123 (VRYDIDMVKCIYCGFCQEACPVEAIVEGPN). Residues C63, C66, C69, C73, C103, C106, C109, and C113 each coordinate [4Fe-4S] cluster.

The protein belongs to the complex I 23 kDa subunit family. NDH-1 is composed of 14 different subunits. Subunits NuoA, H, J, K, L, M, N constitute the membrane sector of the complex. Requires [4Fe-4S] cluster as cofactor.

It localises to the cell inner membrane. It catalyses the reaction a quinone + NADH + 5 H(+)(in) = a quinol + NAD(+) + 4 H(+)(out). Functionally, NDH-1 shuttles electrons from NADH, via FMN and iron-sulfur (Fe-S) centers, to quinones in the respiratory chain. The immediate electron acceptor for the enzyme in this species is believed to be ubiquinone. Couples the redox reaction to proton translocation (for every two electrons transferred, four hydrogen ions are translocated across the cytoplasmic membrane), and thus conserves the redox energy in a proton gradient. The sequence is that of NADH-quinone oxidoreductase subunit I from Bartonella bacilliformis (strain ATCC 35685 / KC583 / Herrer 020/F12,63).